A 61-amino-acid chain; its full sequence is Large ribosomal subunit protein uL30 (61 aa).

Belongs to the universal ribosomal protein uL30 family. As to quaternary structure, part of the 50S ribosomal subunit.

This is Large ribosomal subunit protein uL30 from Thermosipho melanesiensis (strain DSM 12029 / CIP 104789 / BI429).